The sequence spans 192 residues: 7-methyl-GTP pyrophosphatase (192 aa).

Residue D69 is the Proton acceptor of the active site.

Belongs to the Maf family. YceF subfamily. A divalent metal cation serves as cofactor.

The protein resides in the cytoplasm. The catalysed reaction is N(7)-methyl-GTP + H2O = N(7)-methyl-GMP + diphosphate + H(+). Nucleoside triphosphate pyrophosphatase that hydrolyzes 7-methyl-GTP (m(7)GTP). May have a dual role in cell division arrest and in preventing the incorporation of modified nucleotides into cellular nucleic acids. The chain is 7-methyl-GTP pyrophosphatase from Methylobacillus flagellatus (strain ATCC 51484 / DSM 6875 / VKM B-1610 / KT).